Reading from the N-terminus, the 21-residue chain is Cytoplasmic filament protein A (21 aa).

A disordered region spans residues 1 to 21; sequence AILELPQSPNVFHPEKPSAVG.

Its subcellular location is the cytoplasm. In terms of biological role, component of the cytoplasmic filaments that run the length of the organism just underneath the cytoplasmic membrane. This chain is Cytoplasmic filament protein A (cfpA), found in Treponema phagedenis.